The primary structure comprises 272 residues: Replication-associated protein A (272 aa).

Positions 11–114 constitute a CRESS-DNA virus Rep endonuclease domain; that stretch reads SHRNANTFLT…PLAVFERGTF (104 aa). An RCR-1 motif is present at residues 18 to 21; the sequence is FLTY. Residues E52, H60, and H62 each contribute to the a divalent metal cation site. Positions 60 to 62 match the RCR-2 motif; that stretch reads HLH. Catalysis depends on Y100, which acts as the For DNA cleavage activity. The short motif at 100-103 is the RCR-3 element; sequence YILK. E104 lines the a divalent metal cation pocket. The segment at 175–187 is oligomerization; it reads SANKLFPEIQEEF. Positions 198-202 are binding to RBR1; sequence LLCNE. A transactivation region spans residues 221 to 230; sequence MLLQPACYTL. Residues 245–272 are disordered; sequence SHQMKDQESRASTSSAQQEQENLLGPEA. Over residues 254–265 the composition is skewed to polar residues; the sequence is RASTSSAQQEQE.

This sequence belongs to the geminiviridae Rep protein family. In terms of assembly, homooligomer. Interacts with host retinoblastoma-related protein 1 (RBR1), and may thereby deregulate the host cell cycle. Part of the C- and V-complexes which are RepA-Rep-DNA complexes involved in the c-sense and v-sense transcription. Mg(2+) is required as a cofactor. It depends on Mn(2+) as a cofactor.

Its subcellular location is the host nucleus. The protein localises to the host cytoplasm. In terms of biological role, implicated in enhancement of V-sense gene expression. Acts a an inhibitor of C-sense gene transcription. The chain is Replication-associated protein A from Avena sativa (Oat).